A 317-amino-acid chain; its full sequence is Zinc finger protein 771 (317 aa).

Residue Lys33 forms a Glycyl lysine isopeptide (Lys-Gly) (interchain with G-Cter in SUMO2) linkage. C2H2-type zinc fingers lie at residues 63–85 (HACP…ARTH), 91–113 (FACT…GRTH), 119–141 (YQCP…RRRH), 147–169 (YACA…LRVH), 175–197 (YACP…RRTH), 203–225 (YACA…RRVH), 231–253 (HRCA…ARTH), and 259–281 (YPCT…RRAH).

The protein belongs to the krueppel C2H2-type zinc-finger protein family.

It localises to the nucleus. In terms of biological role, may be involved in transcriptional regulation. The sequence is that of Zinc finger protein 771 (Znf771) from Mus musculus (Mouse).